A 292-amino-acid polypeptide reads, in one-letter code: Probable endonuclease 4 (292 aa).

Zn(2+)-binding residues include His-70, His-111, Glu-146, Asp-180, His-183, His-215, Asp-228, His-230, and Glu-260.

The protein belongs to the AP endonuclease 2 family. Requires Zn(2+) as cofactor.

The enzyme catalyses Endonucleolytic cleavage to 5'-phosphooligonucleotide end-products.. Its function is as follows. Endonuclease IV plays a role in DNA repair. It cleaves phosphodiester bonds at apurinic or apyrimidinic (AP) sites, generating a 3'-hydroxyl group and a 5'-terminal sugar phosphate. This Shouchella clausii (strain KSM-K16) (Alkalihalobacillus clausii) protein is Probable endonuclease 4.